Consider the following 92-residue polypeptide: Small ribosomal subunit protein uS19c (92 aa).

This sequence belongs to the universal ribosomal protein uS19 family.

The protein localises to the plastid. It localises to the chloroplast. In terms of biological role, protein S19 forms a complex with S13 that binds strongly to the 16S ribosomal RNA. The polypeptide is Small ribosomal subunit protein uS19c (Adiantum capillus-veneris (Maidenhair fern)).